A 201-amino-acid polypeptide reads, in one-letter code: Single-stranded DNA-binding protein, mitochondrial (201 aa).

The 114-residue stretch at 71–184 (VHRAIICGKV…RDGKIRMIKY (114 aa)) folds into the SSB domain.

The protein localises to the mitochondrion. Binds to ss-DNA. In Arabidopsis thaliana (Mouse-ear cress), this protein is Single-stranded DNA-binding protein, mitochondrial.